The primary structure comprises 717 residues: Ubiquitin carboxyl-terminal hydrolase 11 (717 aa).

The segment at 231-268 (ATAPPVHSLEVSSQIRDSSQDSSSSLSKVEKPKEEEGK) is disordered. A compositionally biased stretch (low complexity) spans 242–257 (SSQIRDSSQDSSSSLS). Positions 258–268 (KVEKPKEEEGK) are enriched in basic and acidic residues. One can recognise a USP domain in the interval 298-707 (TGLQNPCNTC…EVYVLFYERM (410 aa)). The active-site Nucleophile is the Cys307. The tract at residues 531–577 (KKEEITSQKKKSTIFGFHSRSRSKSPHHHHHHHHSSDDSTKNAKKRN) is disordered. Residues 549–564 (SRSRSKSPHHHHHHHH) show a composition bias toward basic residues. His649 acts as the Proton acceptor in catalysis.

This sequence belongs to the peptidase C19 family.

The enzyme catalyses Thiol-dependent hydrolysis of ester, thioester, amide, peptide and isopeptide bonds formed by the C-terminal Gly of ubiquitin (a 76-residue protein attached to proteins as an intracellular targeting signal).. The chain is Ubiquitin carboxyl-terminal hydrolase 11 (UBP11) from Saccharomyces cerevisiae (strain ATCC 204508 / S288c) (Baker's yeast).